The chain runs to 685 residues: DNA ligase (685 aa).

Residues 48–52, 97–98, and Glu131 contribute to the NAD(+) site; these read DAEYD and SL. The active-site N6-AMP-lysine intermediate is Lys133. The NAD(+) site is built by Arg154, Glu190, Lys304, and Lys328. Cys422, Cys425, Cys440, and Cys445 together coordinate Zn(2+). Residues 603-685 enclose the BRCT domain; that stretch reads PEEGPLSGRR…RLLSGEERPG (83 aa).

The protein belongs to the NAD-dependent DNA ligase family. LigA subfamily. The cofactor is Mg(2+). Mn(2+) serves as cofactor.

It catalyses the reaction NAD(+) + (deoxyribonucleotide)n-3'-hydroxyl + 5'-phospho-(deoxyribonucleotide)m = (deoxyribonucleotide)n+m + AMP + beta-nicotinamide D-nucleotide.. In terms of biological role, DNA ligase that catalyzes the formation of phosphodiester linkages between 5'-phosphoryl and 3'-hydroxyl groups in double-stranded DNA using NAD as a coenzyme and as the energy source for the reaction. It is essential for DNA replication and repair of damaged DNA. This Rubrobacter xylanophilus (strain DSM 9941 / JCM 11954 / NBRC 16129 / PRD-1) protein is DNA ligase.